Here is a 559-residue protein sequence, read N- to C-terminus: Glucose-6-phosphate isomerase (559 aa).

The Proton donor role is filled by E352. Active-site residues include H383 and K511.

This sequence belongs to the GPI family.

It is found in the cytoplasm. The enzyme catalyses alpha-D-glucose 6-phosphate = beta-D-fructose 6-phosphate. The protein operates within carbohydrate biosynthesis; gluconeogenesis. It functions in the pathway carbohydrate degradation; glycolysis; D-glyceraldehyde 3-phosphate and glycerone phosphate from D-glucose: step 2/4. In terms of biological role, catalyzes the reversible isomerization of glucose-6-phosphate to fructose-6-phosphate. The polypeptide is Glucose-6-phosphate isomerase (Chlorobium phaeobacteroides (strain DSM 266 / SMG 266 / 2430)).